The following is a 401-amino-acid chain: Argininosuccinate synthase (401 aa).

A9 to S17 contributes to the ATP binding site. Y88 contributes to the L-citrulline binding site. Position 118 (G118) interacts with ATP. L-aspartate contacts are provided by T120, N124, and D125. An L-citrulline-binding site is contributed by N124. 5 residues coordinate L-citrulline: R128, S177, S186, E262, and Y274.

Belongs to the argininosuccinate synthase family. Type 1 subfamily. In terms of assembly, homotetramer.

The protein localises to the cytoplasm. The catalysed reaction is L-citrulline + L-aspartate + ATP = 2-(N(omega)-L-arginino)succinate + AMP + diphosphate + H(+). It participates in amino-acid biosynthesis; L-arginine biosynthesis; L-arginine from L-ornithine and carbamoyl phosphate: step 2/3. The sequence is that of Argininosuccinate synthase from Chlorobaculum tepidum (strain ATCC 49652 / DSM 12025 / NBRC 103806 / TLS) (Chlorobium tepidum).